The sequence spans 639 residues: tRNA uridine 5-carboxymethylaminomethyl modification enzyme MnmG (639 aa).

FAD contacts are provided by residues 13–18 (GGGHAG), valine 125, and serine 180. 273–287 (GPRYCPSIEDKVVRF) is a binding site for NAD(+). An FAD-binding site is contributed by glutamine 370. The interval 620–639 (KRQGGNGPQSPRPDDGRARA) is disordered.

This sequence belongs to the MnmG family. As to quaternary structure, homodimer. Heterotetramer of two MnmE and two MnmG subunits. FAD serves as cofactor.

The protein resides in the cytoplasm. In terms of biological role, NAD-binding protein involved in the addition of a carboxymethylaminomethyl (cmnm) group at the wobble position (U34) of certain tRNAs, forming tRNA-cmnm(5)s(2)U34. The sequence is that of tRNA uridine 5-carboxymethylaminomethyl modification enzyme MnmG from Thioalkalivibrio sulfidiphilus (strain HL-EbGR7).